The sequence spans 256 residues: Glycerol-3-phosphate acyltransferase (256 aa).

6 helical membrane-spanning segments follow: residues 2–22 (FPYL…SVLW), 58–78 (LAVA…AIGL), 90–110 (SYFI…WFKF), 123–143 (LIVV…IFAF), 153–173 (IIGT…GVMG), and 211–231 (FADG…ILVV).

The protein belongs to the PlsY family. Probably interacts with PlsX.

It is found in the cell membrane. It carries out the reaction an acyl phosphate + sn-glycerol 3-phosphate = a 1-acyl-sn-glycero-3-phosphate + phosphate. The protein operates within lipid metabolism; phospholipid metabolism. Functionally, catalyzes the transfer of an acyl group from acyl-phosphate (acyl-PO(4)) to glycerol-3-phosphate (G3P) to form lysophosphatidic acid (LPA). This enzyme utilizes acyl-phosphate as fatty acyl donor, but not acyl-CoA or acyl-ACP. The polypeptide is Glycerol-3-phosphate acyltransferase (Mesoplasma florum (strain ATCC 33453 / NBRC 100688 / NCTC 11704 / L1) (Acholeplasma florum)).